The sequence spans 238 residues: Orotidine 5'-phosphate decarboxylase (238 aa).

Substrate contacts are provided by residues aspartate 10, lysine 32, 59–68, threonine 122, arginine 184, glutamine 193, glycine 213, and arginine 214; that span reads DLKLHDIPNT. Lysine 61 acts as the Proton donor in catalysis.

Belongs to the OMP decarboxylase family. Type 1 subfamily. Homodimer.

The catalysed reaction is orotidine 5'-phosphate + H(+) = UMP + CO2. The protein operates within pyrimidine metabolism; UMP biosynthesis via de novo pathway; UMP from orotate: step 2/2. Catalyzes the decarboxylation of orotidine 5'-monophosphate (OMP) to uridine 5'-monophosphate (UMP). The chain is Orotidine 5'-phosphate decarboxylase from Bacillus cereus (strain G9842).